A 118-amino-acid chain; its full sequence is Ribonuclease P protein component (118 aa).

The protein belongs to the RnpA family. In terms of assembly, consists of a catalytic RNA component (M1 or rnpB) and a protein subunit.

It carries out the reaction Endonucleolytic cleavage of RNA, removing 5'-extranucleotides from tRNA precursor.. RNaseP catalyzes the removal of the 5'-leader sequence from pre-tRNA to produce the mature 5'-terminus. It can also cleave other RNA substrates such as 4.5S RNA. The protein component plays an auxiliary but essential role in vivo by binding to the 5'-leader sequence and broadening the substrate specificity of the ribozyme. This chain is Ribonuclease P protein component, found in Shewanella baltica (strain OS155 / ATCC BAA-1091).